Consider the following 225-residue polypeptide: Probable septum site-determining protein MinC (225 aa).

This sequence belongs to the MinC family. In terms of assembly, interacts with MinD and FtsZ.

Functionally, cell division inhibitor that blocks the formation of polar Z ring septums. Rapidly oscillates between the poles of the cell to destabilize FtsZ filaments that have formed before they mature into polar Z rings. Prevents FtsZ polymerization. The polypeptide is Probable septum site-determining protein MinC (Listeria monocytogenes serotype 4a (strain HCC23)).